A 365-amino-acid chain; its full sequence is 2-aminoethylphosphonate--pyruvate transaminase (365 aa).

Lys-194 carries the N6-(pyridoxal phosphate)lysine modification.

It belongs to the class-V pyridoxal-phosphate-dependent aminotransferase family. PhnW subfamily. Homodimer. The cofactor is pyridoxal 5'-phosphate.

It catalyses the reaction (2-aminoethyl)phosphonate + pyruvate = phosphonoacetaldehyde + L-alanine. Its function is as follows. Involved in phosphonate degradation. The polypeptide is 2-aminoethylphosphonate--pyruvate transaminase (Bacillus thuringiensis (strain Al Hakam)).